The chain runs to 228 residues: Thymidylate kinase (228 aa).

Residue 20–27 (GGEGSGKS) coordinates ATP.

This sequence belongs to the thymidylate kinase family.

The enzyme catalyses dTMP + ATP = dTDP + ADP. In terms of biological role, phosphorylation of dTMP to form dTDP in both de novo and salvage pathways of dTTP synthesis. This chain is Thymidylate kinase, found in Afipia carboxidovorans (strain ATCC 49405 / DSM 1227 / KCTC 32145 / OM5) (Oligotropha carboxidovorans).